A 70-amino-acid chain; its full sequence is Small ribosomal subunit protein bS21 (70 aa).

Belongs to the bacterial ribosomal protein bS21 family.

This Polynucleobacter asymbioticus (strain DSM 18221 / CIP 109841 / QLW-P1DMWA-1) (Polynucleobacter necessarius subsp. asymbioticus) protein is Small ribosomal subunit protein bS21.